The sequence spans 200 residues: AP-5 complex subunit sigma-1 (200 aa).

Probably part of the adaptor protein complex 5 (AP-5) a tetramer composed of AP5B1, AP5M1, AP5S1 and AP5Z1. Interacts with ZFYVE26 and SPG11.

It localises to the cytoplasm. Its subcellular location is the cytosol. It is found in the late endosome membrane. The protein resides in the lysosome membrane. Its function is as follows. As part of AP-5, a probable fifth adaptor protein complex it may be involved in endosomal transport. According to PubMed:20613862, it is required for efficient homologous recombination DNA double-strand break repair. This is AP-5 complex subunit sigma-1 (AP5S1) from Homo sapiens (Human).